We begin with the raw amino-acid sequence, 309 residues long: tRNA dimethylallyltransferase (309 aa).

13-20 (GPTGAGKT) provides a ligand contact to ATP. Position 15-20 (15-20 (TGAGKT)) interacts with substrate. Interaction with substrate tRNA regions lie at residues 38 to 41 (DSRQ) and 162 to 166 (QRVTR).

Belongs to the IPP transferase family. In terms of assembly, monomer. Requires Mg(2+) as cofactor.

It catalyses the reaction adenosine(37) in tRNA + dimethylallyl diphosphate = N(6)-dimethylallyladenosine(37) in tRNA + diphosphate. Catalyzes the transfer of a dimethylallyl group onto the adenine at position 37 in tRNAs that read codons beginning with uridine, leading to the formation of N6-(dimethylallyl)adenosine (i(6)A). The polypeptide is tRNA dimethylallyltransferase (Nitratidesulfovibrio vulgaris (strain ATCC 29579 / DSM 644 / CCUG 34227 / NCIMB 8303 / VKM B-1760 / Hildenborough) (Desulfovibrio vulgaris)).